Consider the following 447-residue polypeptide: Phosphoglucosamine mutase (447 aa).

S107 (phosphoserine intermediate) is an active-site residue. Residues S107, D246, D248, and D250 each contribute to the Mg(2+) site. The residue at position 107 (S107) is a Phosphoserine.

This sequence belongs to the phosphohexose mutase family. The cofactor is Mg(2+). Post-translationally, activated by phosphorylation.

The enzyme catalyses alpha-D-glucosamine 1-phosphate = D-glucosamine 6-phosphate. Its function is as follows. Catalyzes the conversion of glucosamine-6-phosphate to glucosamine-1-phosphate. This Ralstonia pickettii (strain 12J) protein is Phosphoglucosamine mutase.